Here is a 484-residue protein sequence, read N- to C-terminus: tRNA sulfurtransferase (484 aa).

The 105-residue stretch at 63–167 (REMIERLTCT…LDRLFVIHRQ (105 aa)) folds into the THUMP domain. ATP-binding positions include 185-186 (LM), Lys-267, Gly-289, and Gln-298. An intrachain disulfide couples Cys-346 to Cys-457. One can recognise a Rhodanese domain in the interval 405-483 (VLPGQIVIDI…GHTNVRVYRP (79 aa)). The active-site Cysteine persulfide intermediate is Cys-457.

It belongs to the ThiI family.

The protein localises to the cytoplasm. The enzyme catalyses [ThiI sulfur-carrier protein]-S-sulfanyl-L-cysteine + a uridine in tRNA + 2 reduced [2Fe-2S]-[ferredoxin] + ATP + H(+) = [ThiI sulfur-carrier protein]-L-cysteine + a 4-thiouridine in tRNA + 2 oxidized [2Fe-2S]-[ferredoxin] + AMP + diphosphate. It carries out the reaction [ThiS sulfur-carrier protein]-C-terminal Gly-Gly-AMP + S-sulfanyl-L-cysteinyl-[cysteine desulfurase] + AH2 = [ThiS sulfur-carrier protein]-C-terminal-Gly-aminoethanethioate + L-cysteinyl-[cysteine desulfurase] + A + AMP + 2 H(+). Its pathway is cofactor biosynthesis; thiamine diphosphate biosynthesis. In terms of biological role, catalyzes the ATP-dependent transfer of a sulfur to tRNA to produce 4-thiouridine in position 8 of tRNAs, which functions as a near-UV photosensor. Also catalyzes the transfer of sulfur to the sulfur carrier protein ThiS, forming ThiS-thiocarboxylate. This is a step in the synthesis of thiazole, in the thiamine biosynthesis pathway. The sulfur is donated as persulfide by IscS. In Pseudomonas paraeruginosa (strain DSM 24068 / PA7) (Pseudomonas aeruginosa (strain PA7)), this protein is tRNA sulfurtransferase.